Consider the following 522-residue polypeptide: 56 kDa type-specific antigen (522 aa).

The N-terminal stretch at 1–22 is a signal peptide; the sequence is MKKIMLIASAMSALSLPFSASA. The helical transmembrane segment at 67–87 threads the bilayer; that stretch reads LTTMLPFGGTLAAGMTIAPGF. The segment at 385–417 is disordered; it reads AQEEGDDQSQVSCNDKKQQAVAEDSKAGSSKEG. A compositionally biased stretch (basic and acidic residues) spans 398–417; sequence NDKKQQAVAEDSKAGSSKEG. A helical transmembrane segment spans residues 470 to 490; sequence IGVVASGVLGVAINVADGVCV.

It is found in the cell membrane. May be an adherent factor for rickettsial adsorption to the host-cell surface and a determinant of virulence of individual rickettsial strain. It is the major outer membrane protein. The polypeptide is 56 kDa type-specific antigen (Orientia tsutsugamushi (Rickettsia tsutsugamushi)).